A 451-amino-acid polypeptide reads, in one-letter code: tRNA(Ile)-lysidine synthase (451 aa).

ATP is bound at residue 21–26 (SGGLDS).

This sequence belongs to the tRNA(Ile)-lysidine synthase family.

It is found in the cytoplasm. The catalysed reaction is cytidine(34) in tRNA(Ile2) + L-lysine + ATP = lysidine(34) in tRNA(Ile2) + AMP + diphosphate + H(+). Functionally, ligates lysine onto the cytidine present at position 34 of the AUA codon-specific tRNA(Ile) that contains the anticodon CAU, in an ATP-dependent manner. Cytidine is converted to lysidine, thus changing the amino acid specificity of the tRNA from methionine to isoleucine. In Yersinia pseudotuberculosis serotype O:1b (strain IP 31758), this protein is tRNA(Ile)-lysidine synthase.